Reading from the N-terminus, the 434-residue chain is MQVSVETTSNIERRMTIGVPAQEIDQAVQKRLQETARTVRLNGFRPGKVPMSVVKRRFGDSIRQEVVGEAMRDNYIKALQEQDINPAGWPKLEPKTMEEGKDLEFVATFEVLPEIELGDLSKINVEKPVSEVADKDIDNMIDNLRRQQATMKEVKRKSKNKDIVTIDFKGSIDGEEFEGGSAEGHRLTLGSGQMIPGFEKGIVGGKAGEELEIDVTFPEDYHNEDLAGKDAKFAITIHKVEEPQLPELDQEFFKRFGIEAEDEVAFREEVKKNMERELKQAVSNKVKNDVVDGLLETTELEVPAALVDQEIDRLRQDAVQRFGGQVDFQQLPKEIFEEQAKRRVKTGLLFQEVVKKNDLKADEAKVEEKIQEIASTYEQPDEVVAHFNSNPDQKAQVESSVLEDAVVDFVLGAAKVKEKKMKYEEAVQAGQPQR.

The PPIase FKBP-type domain maps to 161–246 (KDIVTIDFKG…IHKVEEPQLP (86 aa)).

It belongs to the FKBP-type PPIase family. Tig subfamily.

Its subcellular location is the cytoplasm. The catalysed reaction is [protein]-peptidylproline (omega=180) = [protein]-peptidylproline (omega=0). In terms of biological role, involved in protein export. Acts as a chaperone by maintaining the newly synthesized protein in an open conformation. Functions as a peptidyl-prolyl cis-trans isomerase. The sequence is that of Trigger factor from Marinobacter nauticus (strain ATCC 700491 / DSM 11845 / VT8) (Marinobacter aquaeolei).